A 167-amino-acid chain; its full sequence is Gametocyte-specific factor 1 (167 aa).

Ser-8 bears the Phosphoserine mark. 2 CHHC U11-48K-type zinc fingers span residues 14–41 (LLQC…RKNH) and 48–75 (LATC…DDRS). Residues Cys-17, His-23, His-33, Cys-37, Cys-51, His-57, His-67, and Cys-71 each contribute to the Zn(2+) site.

This sequence belongs to the UPF0224 (FAM112) family.

It localises to the cytoplasm. Required for spermatogenesis and is involved in the suppression of retrotransposon transcription in male germ cells. This chain is Gametocyte-specific factor 1 (GTSF1), found in Homo sapiens (Human).